The following is a 216-amino-acid chain: Glycerol-3-phosphate acyltransferase (216 aa).

Transmembrane regions (helical) follow at residues 4 to 24, 56 to 76, 80 to 100, 112 to 132, and 138 to 158; these read IALGMIIFAYLCGSISSAILV, VAVLLFDILKGMLPVWIAYLL, PLYLGLTAIAACLGHIYPVFF, FGAIAPIGWDLTGLMTGTWLL, and GYSSLGAIVSALIAPFYVWWF.

The protein belongs to the PlsY family. As to quaternary structure, probably interacts with PlsX.

The protein localises to the cell inner membrane. It catalyses the reaction an acyl phosphate + sn-glycerol 3-phosphate = a 1-acyl-sn-glycero-3-phosphate + phosphate. Its pathway is lipid metabolism; phospholipid metabolism. Its function is as follows. Catalyzes the transfer of an acyl group from acyl-phosphate (acyl-PO(4)) to glycerol-3-phosphate (G3P) to form lysophosphatidic acid (LPA). This enzyme utilizes acyl-phosphate as fatty acyl donor, but not acyl-CoA or acyl-ACP. This Yersinia pseudotuberculosis serotype O:1b (strain IP 31758) protein is Glycerol-3-phosphate acyltransferase.